The primary structure comprises 140 residues: Nucleoside diphosphate kinase (140 aa).

The ATP site is built by Lys-11, Phe-59, Arg-87, Thr-93, Arg-104, and Asn-114. His-117 functions as the Pros-phosphohistidine intermediate in the catalytic mechanism.

The protein belongs to the NDK family. In terms of assembly, homotetramer. It depends on Mg(2+) as a cofactor.

It localises to the cytoplasm. The enzyme catalyses a 2'-deoxyribonucleoside 5'-diphosphate + ATP = a 2'-deoxyribonucleoside 5'-triphosphate + ADP. The catalysed reaction is a ribonucleoside 5'-diphosphate + ATP = a ribonucleoside 5'-triphosphate + ADP. Its function is as follows. Major role in the synthesis of nucleoside triphosphates other than ATP. The ATP gamma phosphate is transferred to the NDP beta phosphate via a ping-pong mechanism, using a phosphorylated active-site intermediate. The chain is Nucleoside diphosphate kinase from Francisella tularensis subsp. holarctica (strain LVS).